A 717-amino-acid polypeptide reads, in one-letter code: Catalase-peroxidase (717 aa).

Positions 1–20 are disordered; it reads MSGKCPVMHGGNTSTGTSNK. The span at 11 to 20 shows a compositional bias: polar residues; the sequence is GNTSTGTSNK. Residues 91–219 constitute a cross-link (tryptophyl-tyrosyl-methioninium (Trp-Tyr) (with M-245)); that stretch reads WHSAGSYRLA…LAAVQMGLIY (129 aa). H92 (proton acceptor) is an active-site residue. The tryptophyl-tyrosyl-methioninium (Tyr-Met) (with W-91) cross-link spans 219–245; sequence YVNPEGVNGQPDPQKTAEQVRETFARM. H260 contacts heme b.

The protein belongs to the peroxidase family. Peroxidase/catalase subfamily. Homodimer or homotetramer. Heme b serves as cofactor. Formation of the three residue Trp-Tyr-Met cross-link is important for the catalase, but not the peroxidase activity of the enzyme.

The enzyme catalyses H2O2 + AH2 = A + 2 H2O. It catalyses the reaction 2 H2O2 = O2 + 2 H2O. Functionally, bifunctional enzyme with both catalase and broad-spectrum peroxidase activity. The chain is Catalase-peroxidase from Chromohalobacter salexigens (strain ATCC BAA-138 / DSM 3043 / CIP 106854 / NCIMB 13768 / 1H11).